Here is a 159-residue protein sequence, read N- to C-terminus: uncharacterized protein (159 aa).

Residues 1 to 139 are disordered; it reads MSRRAPGSRL…RKSQERSMSY (139 aa). Polar residues predominate over residues 9 to 31; sequence RLSSGGTNYSRSWNDWQPRTDSA. The segment covering 65 to 82 has biased composition (basic and acidic residues); sequence QRHDDTRVHADIQNDEKG. Over residues 105-119 the composition is skewed to polar residues; that stretch reads RVNNVTSPEFTSVQH. Residues 125 to 134 are compositionally biased toward basic and acidic residues; it reads ATKDMRKSQE.

This is an uncharacterized protein from Homo sapiens (Human).